We begin with the raw amino-acid sequence, 283 residues long: MPELPEVETVKRGLKNRLKDFYIHDVEVITPRSISSEGGSKAFVKNIIGLKSGEWTRRGKYLICSLHSSDREEIAGWWVVHLRMTGQFQWFQKKTKSCKHTRVRIWNKDGAEIRFVDTRNFGQMWWISPTFLPTEKITGLKKLGPEPFSKEFNPFYLQESLKKRKRSIKSSLLDQSIVAGAGNIYADESLFQAGILPTKESKKLNKTEIKKICTSLTHILKISIGEGGTSFKDFRDLEGVNGKYGGQAWVYGRENKPCRKCGVKILKAKVAGRGTHWCPNCQK.

Residue P2 is the Schiff-base intermediate with DNA of the active site. Residue E3 is the Proton donor of the active site. K60 functions as the Proton donor; for beta-elimination activity in the catalytic mechanism. Residues H100, R119, and R164 each coordinate DNA. An FPG-type zinc finger spans residues 249 to 283 (WVYGRENKPCRKCGVKILKAKVAGRGTHWCPNCQK). R273 functions as the Proton donor; for delta-elimination activity in the catalytic mechanism.

This sequence belongs to the FPG family. In terms of assembly, monomer. Zn(2+) is required as a cofactor.

It catalyses the reaction Hydrolysis of DNA containing ring-opened 7-methylguanine residues, releasing 2,6-diamino-4-hydroxy-5-(N-methyl)formamidopyrimidine.. The catalysed reaction is 2'-deoxyribonucleotide-(2'-deoxyribose 5'-phosphate)-2'-deoxyribonucleotide-DNA = a 3'-end 2'-deoxyribonucleotide-(2,3-dehydro-2,3-deoxyribose 5'-phosphate)-DNA + a 5'-end 5'-phospho-2'-deoxyribonucleoside-DNA + H(+). Involved in base excision repair of DNA damaged by oxidation or by mutagenic agents. Acts as a DNA glycosylase that recognizes and removes damaged bases. Has a preference for oxidized purines, such as 7,8-dihydro-8-oxoguanine (8-oxoG). Has AP (apurinic/apyrimidinic) lyase activity and introduces nicks in the DNA strand. Cleaves the DNA backbone by beta-delta elimination to generate a single-strand break at the site of the removed base with both 3'- and 5'-phosphates. The polypeptide is Formamidopyrimidine-DNA glycosylase (Prochlorococcus marinus (strain SARG / CCMP1375 / SS120)).